A 196-amino-acid polypeptide reads, in one-letter code: CASP-like protein 2U1 (196 aa).

Residues 1–11 lie on the Cytoplasmic side of the membrane; it reads MAPMECVRRRN. A helical membrane pass occupies residues 12-32; that stretch reads VGELVLRCAATLVCMLSLMLL. Topologically, residues 33–58 are extracellular; it reads VRDQQIAVQEVGVTSVTTQLRYSSST. A helical membrane pass occupies residues 59-79; that stretch reads GLVYLVYANGLVALYCFVVVL. The Cytoplasmic segment spans residues 80 to 95; the sequence is TSSFNGGSVMRRNKSG. A helical membrane pass occupies residues 96–116; sequence AWALFVLDQVLACILLSAASA. The Extracellular portion of the chain corresponds to 117–148; sequence ASEIAFLVEKGAKKTIWDSKCIVYGHFCRMLE. Residues 149–169 traverse the membrane as a helical segment; the sequence is VSIATSFIAVIMLGSICVLSA. At 170-196 the chain is on the cytoplasmic side; it reads KQLFQQYTHYARIVNMVKLKSTPNSLL.

Belongs to the Casparian strip membrane proteins (CASP) family. As to quaternary structure, homodimer and heterodimers.

Its subcellular location is the cell membrane. This chain is CASP-like protein 2U1, found in Pteridium aquilinum subsp. aquilinum (Bracken fern).